Here is a 248-residue protein sequence, read N- to C-terminus: Probable transcriptional regulatory protein RPA1097 (248 aa).

The segment at Met-1–Arg-21 is disordered.

This sequence belongs to the TACO1 family.

The protein resides in the cytoplasm. The polypeptide is Probable transcriptional regulatory protein RPA1097 (Rhodopseudomonas palustris (strain ATCC BAA-98 / CGA009)).